We begin with the raw amino-acid sequence, 321 residues long: MGDLPLNINIQEPRWDQSTFLGRARHFFTVTDPRNLLLSGEQLEASRNIVQNYRAGVATPGLTEDQLWRAKYVYDSAFHPDTGEKVVLIGRMSAQVPMNMTITGCMLTFYRKTPTVVFWQWVNQSFNAIVNYSNRSGDAPITVQQLGTAYVSATTGAVATALGLKSLTKHLPPLVGRFVPFAAVAAANCINIPLMRQRELQVGIPVTDEAGQRLGHSVTAAKQGIFQVVISRIGMAIPAMAIPPVIMNTLEKKDFLKRRPWLGAPLQVGLVGFCLVFATPLCCALFPQRSSIHVTRLEPELRAQIQAQNPSIDVVYYNKGL.

The residue at position 1 (methionine 1) is an N-acetylmethionine. Helical transmembrane passes span 146–164, 174–194, 225–245, and 266–286; these read LGTA…ALGL, LVGR…NIPL, IFQV…IPPV, and LQVG…CALF.

The protein belongs to the sideroflexin family. As to expression, widely expressed.

It localises to the mitochondrion membrane. It catalyses the reaction L-serine(in) = L-serine(out). Mitochondrial serine transporter that mediates transport of serine into mitochondria, an important step of the one-carbon metabolism pathway. Mitochondrial serine is converted to glycine and formate, which then exits to the cytosol where it is used to generate the charged folates that serve as one-carbon donors. This is Sideroflexin-3 from Mus musculus (Mouse).